A 115-amino-acid polypeptide reads, in one-letter code: Vespryn (115 aa).

The signal sequence occupies residues 1-15 (MTWLLLCLLAQYENG). The B30.2/SPRY domain maps to 22-115 (SSSAKPYKTS…VKRKDHLRLT (94 aa)).

It belongs to the ohanin/vespryn family. In terms of tissue distribution, expressed by the venom gland.

It is found in the secreted. In terms of biological role, neurotoxin that produces dose-dependent hypolocomotion and hyperalgesia in mice. May directly act on the central nervous system, as it is 6500-fold more potent when administered intracerebroventricularly than intraperitoneal. The protein is Vespryn of Pogona barbata (Bearded dragon).